The primary structure comprises 373 residues: Anhydro-N-acetylmuramic acid kinase (373 aa).

13–20 lines the ATP pocket; it reads GTSMDGID.

This sequence belongs to the anhydro-N-acetylmuramic acid kinase family.

It carries out the reaction 1,6-anhydro-N-acetyl-beta-muramate + ATP + H2O = N-acetyl-D-muramate 6-phosphate + ADP + H(+). The protein operates within amino-sugar metabolism; 1,6-anhydro-N-acetylmuramate degradation. It participates in cell wall biogenesis; peptidoglycan recycling. Its function is as follows. Catalyzes the specific phosphorylation of 1,6-anhydro-N-acetylmuramic acid (anhMurNAc) with the simultaneous cleavage of the 1,6-anhydro ring, generating MurNAc-6-P. Is required for the utilization of anhMurNAc either imported from the medium or derived from its own cell wall murein, and thus plays a role in cell wall recycling. This chain is Anhydro-N-acetylmuramic acid kinase, found in Agrobacterium fabrum (strain C58 / ATCC 33970) (Agrobacterium tumefaciens (strain C58)).